Reading from the N-terminus, the 489-residue chain is Mitochondrial distribution and morphology protein 34 (489 aa).

The SMP-LTD domain maps to 1–205 (MSFNINWDSI…LPSVLYKFSQ (205 aa)).

The protein belongs to the MDM34 family. Component of the ER-mitochondria encounter structure (ERMES) or MDM complex, composed of MMM1, MDM10, MDM12 and MDM34.

It localises to the mitochondrion outer membrane. In terms of biological role, component of the ERMES/MDM complex, which serves as a molecular tether to connect the endoplasmic reticulum (ER) and mitochondria. Components of this complex are involved in the control of mitochondrial shape and protein biogenesis, and function in nonvesicular lipid trafficking between the ER and mitochondria. MDM34 is required for the interaction of the ER-resident membrane protein MMM1 and the outer mitochondrial membrane-resident beta-barrel protein MDM10. This chain is Mitochondrial distribution and morphology protein 34, found in Komagataella phaffii (strain GS115 / ATCC 20864) (Yeast).